Consider the following 79-residue polypeptide: Putative membrane protein insertion efficiency factor (79 aa).

This sequence belongs to the UPF0161 family.

Its subcellular location is the cell inner membrane. Could be involved in insertion of integral membrane proteins into the membrane. This is Putative membrane protein insertion efficiency factor from Prochlorococcus marinus (strain SARG / CCMP1375 / SS120).